The following is a 473-amino-acid chain: ATP synthase subunit beta (473 aa).

ATP is bound at residue 153 to 160 (GGAGVGKT).

Belongs to the ATPase alpha/beta chains family. F-type ATPases have 2 components, CF(1) - the catalytic core - and CF(0) - the membrane proton channel. CF(1) has five subunits: alpha(3), beta(3), gamma(1), delta(1), epsilon(1). CF(0) has three main subunits: a(1), b(2) and c(9-12). The alpha and beta chains form an alternating ring which encloses part of the gamma chain. CF(1) is attached to CF(0) by a central stalk formed by the gamma and epsilon chains, while a peripheral stalk is formed by the delta and b chains.

The protein localises to the cell inner membrane. The catalysed reaction is ATP + H2O + 4 H(+)(in) = ADP + phosphate + 5 H(+)(out). Its function is as follows. Produces ATP from ADP in the presence of a proton gradient across the membrane. The catalytic sites are hosted primarily by the beta subunits. This is ATP synthase subunit beta from Rickettsia massiliae (strain Mtu5).